The sequence spans 246 residues: uncharacterized protein (246 aa).

A signal peptide spans 1 to 24 (MGAPLRHCLLVAAALSLGCGVAAA). 2 helical membrane-spanning segments follow: residues 71–91 (YYLG…IGLV) and 104–124 (FTCA…AGGA).

It localises to the cell membrane. This is an uncharacterized protein from Mycobacterium tuberculosis (strain ATCC 25618 / H37Rv).